Here is a 434-residue protein sequence, read N- to C-terminus: Probable phosphoglucosamine mutase (434 aa).

Serine 91 functions as the Phosphoserine intermediate in the catalytic mechanism. 4 residues coordinate Mg(2+): serine 91, aspartate 229, aspartate 231, and aspartate 233. At serine 91 the chain carries Phosphoserine.

This sequence belongs to the phosphohexose mutase family. Requires Mg(2+) as cofactor. Activated by phosphorylation.

It catalyses the reaction alpha-D-glucosamine 1-phosphate = D-glucosamine 6-phosphate. Its function is as follows. Catalyzes the conversion of glucosamine-6-phosphate to glucosamine-1-phosphate. The chain is Probable phosphoglucosamine mutase from Methanosarcina barkeri (strain Fusaro / DSM 804).